We begin with the raw amino-acid sequence, 428 residues long: MSQQHTLPVTLPPALSQELLNTVPPPINTQQEQREQPVPLPPPCQKVPVELPVEGPSKHEEKHVTIVKGVPEHECEQQQQAQGQERQQQHWGQNKEHQKAGNPEQQLKQEEAQREKQQLQGQLEEEKKLLDQQLDQELAKRDDQLGTKKKQLLEFPEQQEGQLKHLEQQEKPLELPEQQSGQPKYLEQQEGQLKHLEEQKGQLKHLEQQEGQLELPEQVDQPKHLEQLEKQLEHPEQQEGKLKKLEEEEEQLKHLEQQEEQLKHLEQQEGQLEHLEQQEGELKHLEQCEGQLEHLEQQEGQLELPEQQVGQSKHLEQEEKQLEHPEQQEGQLKHLGKQEAQLELPEQVGQPKHLEQQEKQLEHPEQQEEQQEGQLKDLEQQERQLEQPVFAPAPGQAQDIQQALPSKGEVLLPVDQQQQKQEVQWQQK.

Disordered regions lie at residues 1 to 128 and 140 to 398; these read MSQQ…EEKK and KRDD…GQAQ. The segment covering 56 to 76 has biased composition (basic and acidic residues); that stretch reads PSKHEEKHVTIVKGVPEHECE. The span at 77-92 shows a compositional bias: low complexity; sequence QQQQAQGQERQQQHWG. Basic and acidic residues-rich tracts occupy residues 107-117, 162-174, and 192-208; these read LKQEEAQREKQ, QLKH…KPLE, and QLKH…HLEQ. Residues 209-218 show a composition bias toward low complexity; it reads QEGQLELPEQ. Residues 220 to 297 are compositionally biased toward basic and acidic residues; it reads DQPKHLEQLE…CEGQLEHLEQ (78 aa). A compositionally biased stretch (low complexity) spans 298-311; it reads QEGQLELPEQQVGQ. Composition is skewed to basic and acidic residues over residues 313 to 327, 352 to 366, and 374 to 385; these read KHLE…HPEQ and QLKDLEQQERQL.

The protein belongs to the involucrin family. Directly or indirectly cross-linked to cornifelin (CNFN). Post-translationally, substrate of transglutaminase. Specific glutamines or lysines are cross-linked to keratins, desmoplakin and to inter involucrin molecules. Keratinocytes of epidermis and other stratified squamous epithelia.

It is found in the cytoplasm. Part of the insoluble cornified cell envelope (CE) of stratified squamous epithelia. The protein is Involucrin (IVL) of Cebus albifrons (White-fronted capuchin).